The chain runs to 77 residues: MAAIEVGRVCIKTLGREAGNTCVIVEVLDKNFVVIDGSVKRRRCNLKHFEPTDKKVDLEKAASTEEVKLALDAAGLL.

The protein belongs to the eukaryotic ribosomal protein eL14 family.

In Methanococcus maripaludis (strain C5 / ATCC BAA-1333), this protein is Large ribosomal subunit protein eL14.